The chain runs to 141 residues: Ribonuclease P protein component (141 aa).

Belongs to the RnpA family. As to quaternary structure, consists of a catalytic RNA component (M1 or rnpB) and a protein subunit.

The catalysed reaction is Endonucleolytic cleavage of RNA, removing 5'-extranucleotides from tRNA precursor.. In terms of biological role, RNaseP catalyzes the removal of the 5'-leader sequence from pre-tRNA to produce the mature 5'-terminus. It can also cleave other RNA substrates such as 4.5S RNA. The protein component plays an auxiliary but essential role in vivo by binding to the 5'-leader sequence and broadening the substrate specificity of the ribozyme. The protein is Ribonuclease P protein component of Onion yellows phytoplasma (strain OY-M).